A 1304-amino-acid chain; its full sequence is TPR-containing protein DDB_G0280363 (1304 aa).

Disordered stretches follow at residues 19 to 85 (QQHH…HPQQ), 153 to 195 (NINN…NSSL), 296 to 334 (LPSTNSSIVSRQQQLQQQQQKLKLKSSPSPISPFFYTQQ), 447 to 477 (GFNWSPSLQPDQSTSTNHTQAMLQQQQQRQQ), 576 to 687 (QNQQ…VTTI), and 706 to 728 (LTTVNHSKPPPNESKRGELVESP). Composition is skewed to low complexity over residues 25–44 (QQNNTQVQQQQQQHTTQFNQ), 52–85 (HQQHQQQQHHQQQHHQQQQQQQQQQQQQQQHPQQ), and 153–194 (NINN…NNSS). Polar residues predominate over residues 296–306 (LPSTNSSIVSR). The span at 307–316 (QQQLQQQQQK) shows a compositional bias: low complexity. A compositionally biased stretch (polar residues) spans 448 to 465 (FNWSPSLQPDQSTSTNHT). 2 stretches are compositionally biased toward low complexity: residues 466-477 (QAMLQQQQQRQQ) and 576-597 (QNQQQNQQQNQQQNQQHYPNQH). Residues 598–625 (HGQHQHNQHNQHHNQHHNQSHPNHKNQH) are compositionally biased toward basic residues. Residues 626 to 687 (QKQNQTQQST…NNNTNNVTTI (62 aa)) show a composition bias toward low complexity. 7 TPR repeats span residues 769–802 (WRVYLELADLANRQNNLKLARKFYRKVTSTQPYI), 899–932 (MKHVPWYGPIYQEAYKLEERCEEYERAINIVEKG), 978–1011 (WKIYFEAAQIEERSKNLTLSRAAYVKSVELCPEN), 1046–1079 (SKLRSLVLLEYSRLEEYAGNINKSRRILKMAHVE), 1084–1111 (WKVFLESVLLEMRANNYEAAIKEAKESL), 1112–1150 (KIHSGAGRLWAALIQLNQLKGVKSQLNVFKKALQFVPKS), and 1152–1184 (EVWCEGARIALNNNELREARRFLEFAIQFTPQF).

This is TPR-containing protein DDB_G0280363 from Dictyostelium discoideum (Social amoeba).